We begin with the raw amino-acid sequence, 254 residues long: MGYLHDAFSLKGKTALVTGPGTGIGQGIAKALAGAGADIIGTSHTSSLSETQQLVEQEGRIFTSFTLDMSKPEAIKDSAAELFENRQIDILVNNAGIIHREKAEDFPEENWQHVLNVNLNSLFILTQLAGRHMLKRGHGKIINIASLLSFQGGILVPAYTASKHAVAGLTKSFANEWAASGIQVNAIAPGYISTANTKPIRDDEKRNEDILKRIPAGRWGQADDIGGTAVFLASRASDYVNGHILAVDGGWLSR.

16–40 is an NAD(+) binding site; the sequence is LVTGPGTGIGQGIAKALAGAGADII. Residue Ser146 coordinates substrate. The active-site Proton acceptor is Tyr159.

The protein belongs to the short-chain dehydrogenases/reductases (SDR) family.

The catalysed reaction is 2-dehydro-3-deoxy-D-gluconate + NAD(+) = 3-deoxy-D-glycero-2,5-hexodiulosonate + NADH + H(+). Its pathway is glycan metabolism; pectin degradation; 2-dehydro-3-deoxy-D-gluconate from pectin: step 5/5. Catalyzes the reduction of 2,5-diketo-3-deoxygluconate (DKII or 4,6-dihydroxy-2,5-dioxohexanoate) into 2-keto-3-deoxygluconate (KDG or 2-dehydro-3-deoxygluconate) with a concomitant oxidation of NADH. The chain is 2-dehydro-3-deoxy-D-gluconate 5-dehydrogenase (kduD) from Bacillus subtilis (strain 168).